Here is a 759-residue protein sequence, read N- to C-terminus: LON peptidase N-terminal domain and RING finger protein 3 (759 aa).

Positions 1-69 (MESVRIEQML…PGTSTPESKV (69 aa)) are disordered. The span at 57–66 (EQSPGTSTPE) shows a compositional bias: polar residues. Residues 67–100 (SKVLLTQADALASRGRIREALEVYRQLSERQQLV) form a TPR 1 repeat. The RING-type 1 zinc-finger motif lies at 158-196 (CRKCHGFLSDPVSLSCGHTFCKLCLERGRAADRRCALCG). TPR repeat units follow at residues 243 to 276 (ASQL…APND), 278 to 310 (LLYS…RPMG), and 312 to 344 (KAHF…DGKN). Positions 360–454 (HCSSQEEAAA…TDQGDKPALS (95 aa)) are disordered. Over residues 380–393 (AKVKGDGQQHHMKD) the composition is skewed to basic and acidic residues. The RING-type 2 zinc-finger motif lies at 467–505 (CALCMRLFYEPVTTPCGHTFCLKCLERCLDHNAKCPLCK). One can recognise a Lon N-terminal domain in the interval 546 to 755 (MEELSNLNKN…GIRRVLAFIS (210 aa)).

This chain is LON peptidase N-terminal domain and RING finger protein 3 (LONRF3), found in Homo sapiens (Human).